The sequence spans 400 residues: MSRVSQARNLGKYFLLIDNMLVVLGFFVVFPLISIRFVDQMGWAAVMVGIALGLRQFIQQGLGIFGGAIADRFGAKPMIVTGMLMRAAGFATMGIAHEPWLLWFSCLLSGLGGTLFDPPRSALVVKLIRPQQRGRFFSLLMMQDSAGAVIGALLGSWLLQYDFRLVCATGAVLFVLCAAFNAWLLPAWKLSTVRTPVREGMTRVMRDKRFVTYVLTLAGYYMLAVQVMLPIMVNDVAGAPSAVKWMYAIEACLSLTLLYPIARWSEKHFRLEHRLMAGLLIMSLSMMPVGMVSGLQQLFTLICLFYIGSIIAEPARETLSASLADARARGSYMGFSRLGLAIGGAIGYIGGGWLFDLGKSAHQPELPWMMLGIIGIFTFLALGWQFSQKRAARRLLERDA.

Topologically, residues 1–12 are cytoplasmic; it reads MSRVSQARNLGK. Residues 13-33 traverse the membrane as a helical segment; the sequence is YFLLIDNMLVVLGFFVVFPLI. Residues 34–98 lie on the Periplasmic side of the membrane; the sequence is SIRFVDQMGW…GFATMGIAHE (65 aa). The chain crosses the membrane as a helical span at residues 99 to 116; sequence PWLLWFSCLLSGLGGTLF. The Cytoplasmic segment spans residues 117–138; the sequence is DPPRSALVVKLIRPQQRGRFFS. The helical transmembrane segment at 139–159 threads the bilayer; that stretch reads LLMMQDSAGAVIGALLGSWLL. Residues 160–164 are Periplasmic-facing; it reads QYDFR. The chain crosses the membrane as a helical span at residues 165 to 185; sequence LVCATGAVLFVLCAAFNAWLL. The Cytoplasmic segment spans residues 186–213; the sequence is PAWKLSTVRTPVREGMTRVMRDKRFVTY. A helical transmembrane segment spans residues 214–232; it reads VLTLAGYYMLAVQVMLPIM. The Periplasmic segment spans residues 233–241; it reads VNDVAGAPS. Residues 242 to 262 form a helical membrane-spanning segment; it reads AVKWMYAIEACLSLTLLYPIA. At 263-274 the chain is on the cytoplasmic side; the sequence is RWSEKHFRLEHR. Residues 275-295 traverse the membrane as a helical segment; that stretch reads LMAGLLIMSLSMMPVGMVSGL. The Periplasmic portion of the chain corresponds to 296-297; the sequence is QQ. Residues 298 to 318 traverse the membrane as a helical segment; the sequence is LFTLICLFYIGSIIAEPARET. At 319–337 the chain is on the cytoplasmic side; that stretch reads LSASLADARARGSYMGFSR. A helical transmembrane segment spans residues 338–358; sequence LGLAIGGAIGYIGGGWLFDLG. At 359-365 the chain is on the periplasmic side; that stretch reads KSAHQPE. The helical transmembrane segment at 366–386 threads the bilayer; sequence LPWMMLGIIGIFTFLALGWQF. The Cytoplasmic segment spans residues 387-400; the sequence is SQKRAARRLLERDA.

The protein belongs to the major facilitator superfamily. DHA1 family. MdtH (TC 2.A.1.2.21) subfamily.

The protein resides in the cell inner membrane. This is Multidrug resistance protein MdtH from Shigella boydii serotype 4 (strain Sb227).